A 520-amino-acid chain; its full sequence is Ribonuclease Y (520 aa).

A helical membrane pass occupies residues 1–21 (MEILIIVIAAVVGLALGFAIA). One can recognise a KH domain in the interval 210–295 (CVSVFNLESD…EVVKKTRKQI (86 aa)). The region spanning 336–429 (LLQHSREVAK…VQVCDAISGA (94 aa)) is the HD domain.

The protein belongs to the RNase Y family.

It is found in the cell membrane. In terms of biological role, endoribonuclease that initiates mRNA decay. The chain is Ribonuclease Y from Christiangramia forsetii (strain DSM 17595 / CGMCC 1.15422 / KT0803) (Gramella forsetii).